A 295-amino-acid chain; its full sequence is tRNA-cytidine(32) 2-sulfurtransferase (295 aa).

A PP-loop motif motif is present at residues 59-64 (SGGKDS). [4Fe-4S] cluster contacts are provided by C134, C137, and C225.

It belongs to the TtcA family. Homodimer. Mg(2+) serves as cofactor. Requires [4Fe-4S] cluster as cofactor.

The protein localises to the cytoplasm. The enzyme catalyses cytidine(32) in tRNA + S-sulfanyl-L-cysteinyl-[cysteine desulfurase] + AH2 + ATP = 2-thiocytidine(32) in tRNA + L-cysteinyl-[cysteine desulfurase] + A + AMP + diphosphate + H(+). It functions in the pathway tRNA modification. In terms of biological role, catalyzes the ATP-dependent 2-thiolation of cytidine in position 32 of tRNA, to form 2-thiocytidine (s(2)C32). The sulfur atoms are provided by the cysteine/cysteine desulfurase (IscS) system. The chain is tRNA-cytidine(32) 2-sulfurtransferase from Ruegeria sp. (strain TM1040) (Silicibacter sp.).